Reading from the N-terminus, the 55-residue chain is UPF0391 membrane protein RALTA_A0099 (55 aa).

The next 2 helical transmembrane spans lie at 5–25 (ALVFFVIALIAAIFGFGGIAA) and 30–50 (IAKILFFIFLVVALVAAVMGL).

The protein belongs to the UPF0391 family.

The protein localises to the cell membrane. The polypeptide is UPF0391 membrane protein RALTA_A0099 (Cupriavidus taiwanensis (strain DSM 17343 / BCRC 17206 / CCUG 44338 / CIP 107171 / LMG 19424 / R1) (Ralstonia taiwanensis (strain LMG 19424))).